The sequence spans 401 residues: Nodulation protein E (401 aa).

The Ketosynthase family 3 (KS3) domain occupies 2–400; that stretch reads DRRVVITGMG…GTNAVLAFKQ (399 aa). Catalysis depends on for beta-ketoacyl synthase activity residues Cys-161, His-293, and His-330. Residues 328-347 traverse the membrane as a helical segment; sequence HAHCIGAASALEMIACVMAI.

Belongs to the thiolase-like superfamily. Beta-ketoacyl-ACP synthases family.

The protein localises to the cell inner membrane. In terms of biological role, proposed to synthesize NOD factor fatty acyl chain. Involved in the synthesis of a highly unsaturated fatty acid moiety, which forms part of a lipo-oligosaccharide that is responsible for host specificity. The chain is Nodulation protein E (nodE) from Rhizobium meliloti (Ensifer meliloti).